The primary structure comprises 262 residues: Acyl-[acyl-carrier-protein]--UDP-N-acetylglucosamine O-acyltransferase (262 aa).

Belongs to the transferase hexapeptide repeat family. LpxA subfamily. As to quaternary structure, homotrimer.

The protein resides in the cytoplasm. It carries out the reaction a (3R)-hydroxyacyl-[ACP] + UDP-N-acetyl-alpha-D-glucosamine = a UDP-3-O-[(3R)-3-hydroxyacyl]-N-acetyl-alpha-D-glucosamine + holo-[ACP]. The protein operates within glycolipid biosynthesis; lipid IV(A) biosynthesis; lipid IV(A) from (3R)-3-hydroxytetradecanoyl-[acyl-carrier-protein] and UDP-N-acetyl-alpha-D-glucosamine: step 1/6. Functionally, involved in the biosynthesis of lipid A, a phosphorylated glycolipid that anchors the lipopolysaccharide to the outer membrane of the cell. The chain is Acyl-[acyl-carrier-protein]--UDP-N-acetylglucosamine O-acyltransferase from Aliivibrio salmonicida (strain LFI1238) (Vibrio salmonicida (strain LFI1238)).